Reading from the N-terminus, the 243-residue chain is MLIAYLTAGAPDINTTKEAVMKLAKKGADVIEIGVPYSDALADGAILQKASKQALMNGFHLDHLWNLLSEVNEIEVPLVILAYYNQIWHYGVEKWVKKLVAHNVKGLIVPDLPYEESKTLRQICDRYGLNIIWLISPTTNKTRAQELARACKDWIYVISRTGVTGLETEFDKQIPKLIGELKKVTKAPIALGFGISKSEQVKLVKSWGADGVIIGSACMQILLEKGVDQLSEWISVMKKSFCP.

Residues E32 and D43 each act as proton acceptor in the active site.

It belongs to the TrpA family. Tetramer of two alpha and two beta chains.

The protein localises to the plastid. It is found in the chloroplast. It carries out the reaction (1S,2R)-1-C-(indol-3-yl)glycerol 3-phosphate + L-serine = D-glyceraldehyde 3-phosphate + L-tryptophan + H2O. It participates in amino-acid biosynthesis; L-tryptophan biosynthesis; L-tryptophan from chorismate: step 5/5. Functionally, the alpha subunit is responsible for the aldol cleavage of indoleglycerol phosphate to indole and glyceraldehyde 3-phosphate. The sequence is that of Tryptophan synthase alpha chain from Cyanidioschyzon merolae (strain NIES-3377 / 10D) (Unicellular red alga).